A 182-amino-acid polypeptide reads, in one-letter code: Oligoribonuclease (182 aa).

In terms of domain architecture, Exonuclease spans 7–170 (LIWIDLEMTG…EDIRESVEEL (164 aa)). Tyr128 is a catalytic residue.

Belongs to the oligoribonuclease family.

It is found in the cytoplasm. Functionally, 3'-to-5' exoribonuclease specific for small oligoribonucleotides. The polypeptide is Oligoribonuclease (Hahella chejuensis (strain KCTC 2396)).